A 410-amino-acid chain; its full sequence is Elongation factor Tu (410 aa).

In terms of domain architecture, tr-type G spans 10–219 (KTHVNVGTIG…ALDTYIPDPV (210 aa)). Residues 19 to 26 (GHVDHGKT), 88 to 92 (DCPGH), and 143 to 146 (NKCD) each bind GTP. Residue threonine 26 participates in Mg(2+) binding.

Belongs to the TRAFAC class translation factor GTPase superfamily. Classic translation factor GTPase family. EF-Tu/EF-1A subfamily. As to quaternary structure, monomer.

The protein resides in the cytoplasm. It carries out the reaction GTP + H2O = GDP + phosphate + H(+). In terms of biological role, GTP hydrolase that promotes the GTP-dependent binding of aminoacyl-tRNA to the A-site of ribosomes during protein biosynthesis. The sequence is that of Elongation factor Tu from Brachyspira hyodysenteriae (Treponema hyodysenteriae).